The primary structure comprises 357 residues: UDP-N-acetylglucosamine--N-acetylmuramyl-(pentapeptide) pyrophosphoryl-undecaprenol N-acetylglucosamine transferase (357 aa).

UDP-N-acetyl-alpha-D-glucosamine-binding positions include 15 to 17 (TGG), N123, R164, S190, and Q284.

The protein belongs to the glycosyltransferase 28 family. MurG subfamily.

The protein localises to the cell inner membrane. It catalyses the reaction di-trans,octa-cis-undecaprenyl diphospho-N-acetyl-alpha-D-muramoyl-L-alanyl-D-glutamyl-meso-2,6-diaminopimeloyl-D-alanyl-D-alanine + UDP-N-acetyl-alpha-D-glucosamine = di-trans,octa-cis-undecaprenyl diphospho-[N-acetyl-alpha-D-glucosaminyl-(1-&gt;4)]-N-acetyl-alpha-D-muramoyl-L-alanyl-D-glutamyl-meso-2,6-diaminopimeloyl-D-alanyl-D-alanine + UDP + H(+). It participates in cell wall biogenesis; peptidoglycan biosynthesis. Its function is as follows. Cell wall formation. Catalyzes the transfer of a GlcNAc subunit on undecaprenyl-pyrophosphoryl-MurNAc-pentapeptide (lipid intermediate I) to form undecaprenyl-pyrophosphoryl-MurNAc-(pentapeptide)GlcNAc (lipid intermediate II). This is UDP-N-acetylglucosamine--N-acetylmuramyl-(pentapeptide) pyrophosphoryl-undecaprenol N-acetylglucosamine transferase from Synechococcus elongatus (strain ATCC 33912 / PCC 7942 / FACHB-805) (Anacystis nidulans R2).